The chain runs to 323 residues: ATP synthase gamma chain (323 aa).

This sequence belongs to the ATPase gamma chain family. F-type ATPases have 2 components, CF(1) - the catalytic core - and CF(0) - the membrane proton channel. CF(1) has five subunits: alpha(3), beta(3), gamma(1), delta(1), epsilon(1). CF(0) has three main subunits: a, b and c.

It localises to the cell membrane. Functionally, produces ATP from ADP in the presence of a proton gradient across the membrane. The gamma chain is believed to be important in regulating ATPase activity and the flow of protons through the CF(0) complex. The protein is ATP synthase gamma chain of Nocardia farcinica (strain IFM 10152).